The following is a 299-amino-acid chain: GTP cyclohydrolase FolE2 (299 aa).

Belongs to the GTP cyclohydrolase IV family.

The enzyme catalyses GTP + H2O = 7,8-dihydroneopterin 3'-triphosphate + formate + H(+). The protein operates within cofactor biosynthesis; 7,8-dihydroneopterin triphosphate biosynthesis; 7,8-dihydroneopterin triphosphate from GTP: step 1/1. Converts GTP to 7,8-dihydroneopterin triphosphate. This chain is GTP cyclohydrolase FolE2, found in Citrobacter koseri (strain ATCC BAA-895 / CDC 4225-83 / SGSC4696).